A 617-amino-acid chain; its full sequence is V-type proton ATPase catalytic subunit A (617 aa).

Position 136 is a phosphothreonine (Thr136). Residue 250-257 (GAFGCGKT) coordinates ATP. At Ser384 the chain carries Phosphoserine; by AMPK.

Belongs to the ATPase alpha/beta chains family. In terms of assembly, V-ATPase is a heteromultimeric enzyme made up of two complexes: the ATP-hydrolytic V1 complex and the proton translocation V0 complex. The V1 complex consists of three catalytic AB heterodimers that form a heterohexamer, three peripheral stalks each consisting of EG heterodimers, one central rotor including subunits D and F, and the regulatory subunits C and H. The proton translocation complex V0 consists of the proton transport subunit a, a ring of proteolipid subunits c9c'', rotary subunit d, subunits e and f, and the accessory subunits ATP6AP1/Ac45 and ATP6AP2/PRR. Interacts with the V0 complex V-ATPase subunit a4 ATP6V0A4. Interacts with WFS1. Interacts with alpha-crystallin B chain/CRYAB and with MTOR, forming a ternary complex. In terms of processing, phosphorylation at Ser-384 by AMPK down-regulates its enzyme activity.

It is found in the cytoplasm. The protein localises to the cytosol. It localises to the cytoplasmic vesicle. The protein resides in the secretory vesicle. Its subcellular location is the clathrin-coated vesicle membrane. It is found in the lysosome. The enzyme catalyses ATP + H2O + 4 H(+)(in) = ADP + phosphate + 5 H(+)(out). ATP hydrolysis occurs at the interface between the nucleotide-binding domains of subunits A and B. ATP hydrolysis triggers a conformational change in the subunits D and F, which induces a shift of subunit d. The c-ring is subsequently rotated and results in a continuous proton translocation across the membrane. Its function is as follows. Catalytic subunit of the V1 complex of vacuolar(H+)-ATPase (V-ATPase), a multisubunit enzyme composed of a peripheral complex (V1) that hydrolyzes ATP and a membrane integral complex (V0) that translocates protons. V-ATPase is responsible for acidifying and maintaining the pH of intracellular compartments and in some cell types, is targeted to the plasma membrane, where it is responsible for acidifying the extracellular environment. In aerobic conditions, involved in intracellular iron homeostasis, thus triggering the activity of Fe(2+) prolyl hydroxylase (PHD) enzymes, and leading to HIF1A hydroxylation and subsequent proteasomal degradation. May play a role in neurite development and synaptic connectivity. This Pongo abelii (Sumatran orangutan) protein is V-type proton ATPase catalytic subunit A (ATP6V1A).